The sequence spans 302 residues: Uricase (302 aa).

Residue Ser-2 is modified to N-acetylserine. Residues Lys-11 and Thr-58 each act as charge relay system in the active site. 5-hydroxyisourate-binding residues include Thr-58, Asp-59, Phe-160, Arg-177, Val-228, Gln-229, and Asn-255. Thr-58 contacts O2. Urate contacts are provided by Thr-58, Asp-59, Phe-160, Arg-177, Val-228, Gln-229, and Asn-255. O2 is bound at residue Asn-255. The active-site Charge relay system is the His-257. Residues 300 to 302 (SKL) carry the Microbody targeting signal motif.

This sequence belongs to the uricase family. As to quaternary structure, homotetramer.

It is found in the peroxisome. The enzyme catalyses urate + O2 + H2O = 5-hydroxyisourate + H2O2. It functions in the pathway purine metabolism; urate degradation; (S)-allantoin from urate: step 1/3. Its activity is regulated as follows. 8-Azaxanthine is one of the most potent competitive inhibitors of uricase activity. Hypoxanthine has only a small inhibitor effect, and caffeine has no effect at all. Azide not only competes with dioxygen but also competes with the substrate for its enzymatic site. Functionally, urate oxidase is a cofactorless enzyme involved in the metabolism of purines. Catalyzes, in the presence of molecular oxygen, the hydroxylation of uric acid to metastable 5-hydroxyisourate (5-HIU) which is further degraded to allantoin. This Aspergillus flavus protein is Uricase.